Here is a 122-residue protein sequence, read N- to C-terminus: Small ribosomal subunit protein uS10y (122 aa).

The protein belongs to the universal ribosomal protein uS10 family.

The protein is Small ribosomal subunit protein uS10y (RPS20B) of Arabidopsis thaliana (Mouse-ear cress).